The primary structure comprises 349 residues: S-adenosylmethionine:tRNA ribosyltransferase-isomerase (349 aa).

This sequence belongs to the QueA family. As to quaternary structure, monomer.

The protein resides in the cytoplasm. The enzyme catalyses 7-aminomethyl-7-carbaguanosine(34) in tRNA + S-adenosyl-L-methionine = epoxyqueuosine(34) in tRNA + adenine + L-methionine + 2 H(+). Its pathway is tRNA modification; tRNA-queuosine biosynthesis. In terms of biological role, transfers and isomerizes the ribose moiety from AdoMet to the 7-aminomethyl group of 7-deazaguanine (preQ1-tRNA) to give epoxyqueuosine (oQ-tRNA). This Ruegeria pomeroyi (strain ATCC 700808 / DSM 15171 / DSS-3) (Silicibacter pomeroyi) protein is S-adenosylmethionine:tRNA ribosyltransferase-isomerase.